The sequence spans 203 residues: Urease accessory protein UreG (203 aa).

Residue 11-18 coordinates GTP; the sequence is GPVGSGKT.

The protein belongs to the SIMIBI class G3E GTPase family. UreG subfamily. In terms of assembly, homodimer. UreD, UreF and UreG form a complex that acts as a GTP-hydrolysis-dependent molecular chaperone, activating the urease apoprotein by helping to assemble the nickel containing metallocenter of UreC. The UreE protein probably delivers the nickel.

It localises to the cytoplasm. Functionally, facilitates the functional incorporation of the urease nickel metallocenter. This process requires GTP hydrolysis, probably effectuated by UreG. The polypeptide is Urease accessory protein UreG (Prochlorococcus marinus (strain MIT 9301)).